The chain runs to 267 residues: Glucosamine-6-phosphate deaminase (267 aa).

Asp-72 acts as the Proton acceptor; for enolization step in catalysis. The active-site For ring-opening step is Asp-141. The active-site Proton acceptor; for ring-opening step is His-143. Glu-148 acts as the For ring-opening step in catalysis.

Belongs to the glucosamine/galactosamine-6-phosphate isomerase family. NagB subfamily. Homohexamer.

It carries out the reaction alpha-D-glucosamine 6-phosphate + H2O = beta-D-fructose 6-phosphate + NH4(+). The protein operates within amino-sugar metabolism; N-acetylneuraminate degradation; D-fructose 6-phosphate from N-acetylneuraminate: step 5/5. Its activity is regulated as follows. Allosterically activated by N-acetylglucosamine 6-phosphate (GlcNAc6P). Its function is as follows. Catalyzes the reversible isomerization-deamination of glucosamine 6-phosphate (GlcN6P) to form fructose 6-phosphate (Fru6P) and ammonium ion. The polypeptide is Glucosamine-6-phosphate deaminase (Actinobacillus pleuropneumoniae serotype 5b (strain L20)).